The sequence spans 128 residues: C-C motif chemokine 28 (128 aa).

The N-terminal stretch at 1–24 (MQQTGLTLALVALAVCVALPSSEA) is a signal peptide. 2 disulfides stabilise this stretch: C32–C60 and C33–C75. Residues 89 to 128 (EQAAKKNTKGNICHKKQAGKRKSKGAHQEKPEIHSHKSPY) are disordered. Residues 94–113 (KNTKGNICHKKQAGKRKSKG) show a composition bias toward basic residues. Residues 114–128 (AHQEKPEIHSHKSPY) show a composition bias toward basic and acidic residues.

It belongs to the intercrine beta (chemokine CC) family.

The protein resides in the secreted. Chemotactic activity for resting CD4, CD8 T-cells and eosinophils. Binds to CCR3 and CCR10 and induces calcium mobilization in a dose-dependent manner. The chain is C-C motif chemokine 28 (CCL28) from Canis lupus familiaris (Dog).